Here is a 131-residue protein sequence, read N- to C-terminus: D-ribose pyranase (131 aa).

The active-site Proton donor is His-20. Substrate contacts are provided by residues Asp-28, His-98, and 120 to 122 (YAN).

It belongs to the RbsD / FucU family. RbsD subfamily. In terms of assembly, homodecamer.

Its subcellular location is the cytoplasm. The enzyme catalyses beta-D-ribopyranose = beta-D-ribofuranose. Its pathway is carbohydrate metabolism; D-ribose degradation; D-ribose 5-phosphate from beta-D-ribopyranose: step 1/2. Functionally, catalyzes the interconversion of beta-pyran and beta-furan forms of D-ribose. This Bacillus velezensis (strain DSM 23117 / BGSC 10A6 / LMG 26770 / FZB42) (Bacillus amyloliquefaciens subsp. plantarum) protein is D-ribose pyranase.